The primary structure comprises 409 residues: Glycosyltransferase GtfC (409 aa).

The protein belongs to the glycosyltransferase 28 family.

The enzyme catalyses dTDP-beta-L-vancosamine + devancoaminyl-vancomycin = epivancomycin + dTDP + H(+). The catalysed reaction is chloroorienticin B + dTDP-beta-L-vancosamine = chloroeremomycin + dTDP + H(+). The protein operates within antibiotic biosynthesis; vancomycin biosynthesis. Its function is as follows. Catalyzes the attachment of dTDP-L-4-epi-vancosamine to chloroorienticin B to form chloroeremomycin in the biosynthesis of glycopeptide antibiotic chloroeremomycin, a member of the vancomycin group of antibiotics. Also able to use dTDP-L-4-epi-vancosamine and devancoaminyl-vancomycin (DVV) to create epivancomycin. Acts downstream of GtfA. The chain is Glycosyltransferase GtfC (gtfC) from Amycolatopsis orientalis (Nocardia orientalis).